The following is a 251-amino-acid chain: ATP synthase subunit a (251 aa).

5 helical membrane passes run G14–V34, Y78–F98, S107–I127, M174–L194, and L196–A216. The disordered stretch occupies residues N224 to P251.

Belongs to the ATPase A chain family. F-type ATPases have 2 components, CF(1) - the catalytic core - and CF(0) - the membrane proton channel. CF(1) has five subunits: alpha(3), beta(3), gamma(1), delta(1), epsilon(1). CF(0) has three main subunits: a(1), b(2) and c(9-12). The alpha and beta chains form an alternating ring which encloses part of the gamma chain. CF(1) is attached to CF(0) by a central stalk formed by the gamma and epsilon chains, while a peripheral stalk is formed by the delta and b chains.

Its subcellular location is the cell inner membrane. In terms of biological role, key component of the proton channel; it plays a direct role in the translocation of protons across the membrane. The polypeptide is ATP synthase subunit a (Nitrosospira multiformis (strain ATCC 25196 / NCIMB 11849 / C 71)).